Here is a 353-residue protein sequence, read N- to C-terminus: Photosystem II D2 protein (353 aa).

Residue threonine 2 is modified to N-acetylthreonine. At threonine 2 the chain carries Phosphothreonine. The helical transmembrane segment at 41 to 61 (CAYFALGGWFTGTTFVTSWYT) threads the bilayer. Histidine 118 contacts chlorophyll a. Residues 125-141 (GFMLRQFELARSVQLRP) form a helical membrane-spanning segment. Glutamine 130 and asparagine 143 together coordinate pheophytin a. The chain crosses the membrane as a helical span at residues 153 to 166 (VFVSVFLIYPLGQS). Histidine 198 contributes to the chlorophyll a binding site. Residues 208–228 (AALLCAIHGATVENTLFEDGD) form a helical membrane-spanning segment. Residues histidine 215 and phenylalanine 262 each contribute to the a plastoquinone site. Histidine 215 serves as a coordination point for Fe cation. Histidine 269 provides a ligand contact to Fe cation. Residues 279-295 (GLWMSALGVVGLALNLR) traverse the membrane as a helical segment.

It belongs to the reaction center PufL/M/PsbA/D family. PSII is composed of 1 copy each of membrane proteins PsbA, PsbB, PsbC, PsbD, PsbE, PsbF, PsbH, PsbI, PsbJ, PsbK, PsbL, PsbM, PsbT, PsbX, PsbY, PsbZ, Psb30/Ycf12, at least 3 peripheral proteins of the oxygen-evolving complex and a large number of cofactors. It forms dimeric complexes. The D1/D2 heterodimer binds P680, chlorophylls that are the primary electron donor of PSII, and subsequent electron acceptors. It shares a non-heme iron and each subunit binds pheophytin, quinone, additional chlorophylls, carotenoids and lipids. There is also a Cl(-1) ion associated with D1 and D2, which is required for oxygen evolution. The PSII complex binds additional chlorophylls, carotenoids and specific lipids. serves as cofactor.

The protein localises to the plastid. The protein resides in the chloroplast thylakoid membrane. The catalysed reaction is 2 a plastoquinone + 4 hnu + 2 H2O = 2 a plastoquinol + O2. Functionally, photosystem II (PSII) is a light-driven water:plastoquinone oxidoreductase that uses light energy to abstract electrons from H(2)O, generating O(2) and a proton gradient subsequently used for ATP formation. It consists of a core antenna complex that captures photons, and an electron transfer chain that converts photonic excitation into a charge separation. The D1/D2 (PsbA/PsbD) reaction center heterodimer binds P680, the primary electron donor of PSII as well as several subsequent electron acceptors. D2 is needed for assembly of a stable PSII complex. The protein is Photosystem II D2 protein of Dioscorea elephantipes (Elephant's foot yam).